Reading from the N-terminus, the 392-residue chain is Succinate--CoA ligase [ADP-forming] subunit beta (392 aa).

The 240-residue stretch at 9–248 folds into the ATP-grasp domain; the sequence is KEILRGFGVT…TSEEDPLEVE (240 aa). Residues lysine 50, 57-59, glutamate 103, methionine 106, and glutamate 111 contribute to the ATP site; that span reads GRG. Positions 203 and 217 each coordinate Mg(2+). Substrate is bound by residues asparagine 268 and 325-327; that span reads GIV.

It belongs to the succinate/malate CoA ligase beta subunit family. Heterotetramer of two alpha and two beta subunits. The cofactor is Mg(2+).

It carries out the reaction succinate + ATP + CoA = succinyl-CoA + ADP + phosphate. The enzyme catalyses GTP + succinate + CoA = succinyl-CoA + GDP + phosphate. The protein operates within carbohydrate metabolism; tricarboxylic acid cycle; succinate from succinyl-CoA (ligase route): step 1/1. Functionally, succinyl-CoA synthetase functions in the citric acid cycle (TCA), coupling the hydrolysis of succinyl-CoA to the synthesis of either ATP or GTP and thus represents the only step of substrate-level phosphorylation in the TCA. The beta subunit provides nucleotide specificity of the enzyme and binds the substrate succinate, while the binding sites for coenzyme A and phosphate are found in the alpha subunit. The chain is Succinate--CoA ligase [ADP-forming] subunit beta from Chloroherpeton thalassium (strain ATCC 35110 / GB-78).